Here is a 143-residue protein sequence, read N- to C-terminus: P840 reaction center 17 kDa protein (143 aa).

Residues 1–23 (MQPQLSRPQTATNQVRNSVSGPW) are compositionally biased toward polar residues. The segment at 1–25 (MQPQLSRPQTATNQVRNSVSGPWSG) is disordered.

Component of the P840 reaction center.

The protein is P840 reaction center 17 kDa protein (pscD) of Chlorobaculum thiosulfatiphilum (Chlorobium limicola f.sp. thiosulfatophilum).